Reading from the N-terminus, the 358-residue chain is L-tryptophan methyltransferase trpM (358 aa).

It belongs to the methyltransferase superfamily.

It carries out the reaction L-tryptophan + S-adenosyl-L-methionine = N(alpha)-methyl-L-tryptophan + S-adenosyl-L-homocysteine + H(+). The catalysed reaction is N(alpha)-methyl-L-tryptophan + S-adenosyl-L-methionine = N(alpha),N(alpha)-dimethyl-L-tryptophan + S-adenosyl-L-homocysteine + H(+). It catalyses the reaction N(alpha),N(alpha)-dimethyl-L-tryptophan + S-adenosyl-L-methionine = N(alpha),N(alpha),N(alpha)-trimethyl-L-tryptophan + S-adenosyl-L-homocysteine + H(+). Functionally, methyltransferase that catalyzes iterative L-tryptophan N-methylations to produce L-abrine (N-alpha-methyl-L-tryptophan) and N,N-alpha-dimethyl-L-tryptophan. Also catalyzes a third methylation to yield L-hypaphorine (N,N,N-alpha-trimethyl-L-tryptopan), an agonist of the phytohormone indole-3-acetic acid. Can also N-methylate the non-native amino acid substrate 4-hydroxytryptophan, but the ability to incorporate trpM into a functional psilocybin biosynthesis pathway is indeed thwarted by the inability of the L-tryptophan decarboxylase psiD to use N,N-dimethyl-4-hydroxytryptophan as substrate. This chain is L-tryptophan methyltransferase trpM, found in Psilocybe serbica.